We begin with the raw amino-acid sequence, 591 residues long: CTP synthase 1-B (591 aa).

The region spanning 300-554 (SIALVGKYTK…LASVGRLSQY (255 aa)) is the Glutamine amidotransferase type-1 domain. Active-site for GATase activity residues include C399, H526, and E528. Basic and acidic residues predominate over residues 562-572 (SPRDTYSDRSE). Positions 562–581 (SPRDTYSDRSENSSPDAEIA) are disordered.

Belongs to the CTP synthase family.

The catalysed reaction is UTP + L-glutamine + ATP + H2O = CTP + L-glutamate + ADP + phosphate + 2 H(+). The protein operates within pyrimidine metabolism; CTP biosynthesis via de novo pathway; CTP from UDP: step 2/2. Functionally, this enzyme is involved in the de novo synthesis of CTP, a precursor of DNA, RNA and phospholipids. Catalyzes the ATP-dependent amination of UTP to CTP with either L-glutamine or ammonia as a source of nitrogen. This is CTP synthase 1-B (ctps1-b) from Xenopus laevis (African clawed frog).